Consider the following 379-residue polypeptide: Small ribosomal subunit protein uS2cy (379 aa).

Residues 1–94 are N-terminal extension; it reads MKLVQFFEIG…MGTSSNRAKS (94 aa). The interval 83–106 is disordered; the sequence is NQMGTSSNRAKSTDTPAVSTSQNV.

The protein belongs to the universal ribosomal protein uS2 family.

The protein localises to the plastid. Its subcellular location is the chloroplast. The sequence is that of Small ribosomal subunit protein uS2cy (rps2-2) from Tetradesmus obliquus (Green alga).